A 120-amino-acid chain; its full sequence is MFASTEIRLTFCQDRPEPREDDSYGVVVQESKPALKVPPMYKVVMFNDDYTPMDFVVEVLEKFFNLNRELATKVMLTVHTEGRAVCGMFTRDVAETKAMQVNQYARECQHPLLCEIEKDG.

It belongs to the ClpS family. Binds to the N-terminal domain of the chaperone ClpA.

In terms of biological role, involved in the modulation of the specificity of the ClpAP-mediated ATP-dependent protein degradation. The polypeptide is ATP-dependent Clp protease adapter protein ClpS (Azotobacter vinelandii (strain DJ / ATCC BAA-1303)).